The primary structure comprises 485 residues: Glucagon receptor (485 aa).

A signal peptide spans 1–26; it reads MLLTQLHCPYLLLLLVVLSCLPKAPS. Residues 27 to 137 are Extracellular-facing; sequence AQVMDFLFEK…EIEVQKGVAK (111 aa). 3 disulfide bridges follow: C44-C68, C59-C101, and C82-C122. Residues N47, N60, N75, and N79 are each glycosylated (N-linked (GlcNAc...) asparagine). Residues 138–162 form a helical membrane-spanning segment; it reads MYSSYQVMYTVGYSLSLGALLLALV. At 163 to 174 the chain is on the cytoplasmic side; it reads ILLGLRKLHCTR. The helical transmembrane segment at 175 to 199 threads the bilayer; sequence NYIHGNLFASFVLKAGSVLVIDWLL. At 200 to 226 the chain is on the extracellular side; the sequence is KTRYSQKIGDDLSVSVWLSDGAVAGCR. A disulfide bridge links C225 with C295. A helical membrane pass occupies residues 227–250; sequence VATVIMQYGIIANYCWLLVEGVYL. Residues 251-264 lie on the Cytoplasmic side of the membrane; the sequence is YSLLSITTFSEKSF. The helical transmembrane segment at 265–286 threads the bilayer; the sequence is FSLYLCIGWGSPLLFVIPWVVV. Topologically, residues 287–304 are extracellular; the sequence is KCLFENVQCWTSNDNMGF. The helical transmembrane segment at 305 to 327 threads the bilayer; the sequence is WWILRIPVLLAILINFFIFVRII. Topologically, residues 328 to 351 are cytoplasmic; the sequence is HLLVAKLRAHQMHYADYKFRLARS. An important for allosteric inhibitor binding region spans residues 351–354; the sequence is STLT. The chain crosses the membrane as a helical span at residues 352 to 370; sequence TLTLIPLLGVHEVVFAFVT. At 371-382 the chain is on the extracellular side; it reads DEHAQGTLRSTK. A helical transmembrane segment spans residues 383–403; the sequence is LFFDLFFSSFQGLLVAVLYCF. At 404 to 485 the chain is on the cytoplasmic side; the sequence is LNKEVQAELL…SLPRLADSPT (82 aa). Positions 455-485 are disordered; it reads MSAGSSSGTGCEPSAKTSLASSLPRLADSPT. The segment covering 456–475 has biased composition (polar residues); sequence SAGSSSGTGCEPSAKTSLAS. Phosphoserine is present on residues S460 and S476.

Belongs to the G-protein coupled receptor 2 family. In terms of processing, ligand-binding promotes phosphorylation of serine residues in the C-terminal cytoplasmic domain. Phosphorylation is important for receptor endocytosis after ligand-binding.

The protein resides in the cell membrane. G-protein coupled receptor for glucagon that plays a central role in the regulation of blood glucose levels and glucose homeostasis. Regulates the rate of hepatic glucose production by promoting glycogen hydrolysis and gluconeogenesis. Plays an important role in mediating the responses to fasting. Ligand binding causes a conformation change that triggers signaling via guanine nucleotide-binding proteins (G proteins) and modulates the activity of down-stream effectors, such as adenylate cyclase. Promotes activation of adenylate cyclase. Besides, plays a role in signaling via a phosphatidylinositol-calcium second messenger system. The polypeptide is Glucagon receptor (Gcgr) (Rattus norvegicus (Rat)).